Reading from the N-terminus, the 345-residue chain is Phosphoribosylformylglycinamidine cyclo-ligase (345 aa).

The protein belongs to the AIR synthase family.

Its subcellular location is the cytoplasm. It catalyses the reaction 2-formamido-N(1)-(5-O-phospho-beta-D-ribosyl)acetamidine + ATP = 5-amino-1-(5-phospho-beta-D-ribosyl)imidazole + ADP + phosphate + H(+). It participates in purine metabolism; IMP biosynthesis via de novo pathway; 5-amino-1-(5-phospho-D-ribosyl)imidazole from N(2)-formyl-N(1)-(5-phospho-D-ribosyl)glycinamide: step 2/2. This Shewanella frigidimarina (strain NCIMB 400) protein is Phosphoribosylformylglycinamidine cyclo-ligase.